Consider the following 202-residue polypeptide: dITP/XTP pyrophosphatase (202 aa).

Position 7 to 12 (7 to 12 (SRNEAK)) interacts with substrate. The active-site Proton acceptor is Asp-68. Mg(2+) is bound at residue Asp-68. Residues Ser-69, 156-159 (FGYD), Lys-179, and 184-185 (HR) each bind substrate.

The protein belongs to the HAM1 NTPase family. As to quaternary structure, homodimer. Mg(2+) serves as cofactor.

The enzyme catalyses XTP + H2O = XMP + diphosphate + H(+). It catalyses the reaction dITP + H2O = dIMP + diphosphate + H(+). It carries out the reaction ITP + H2O = IMP + diphosphate + H(+). Functionally, pyrophosphatase that catalyzes the hydrolysis of nucleoside triphosphates to their monophosphate derivatives, with a high preference for the non-canonical purine nucleotides XTP (xanthosine triphosphate), dITP (deoxyinosine triphosphate) and ITP. Seems to function as a house-cleaning enzyme that removes non-canonical purine nucleotides from the nucleotide pool, thus preventing their incorporation into DNA/RNA and avoiding chromosomal lesions. This chain is dITP/XTP pyrophosphatase, found in Frankia alni (strain DSM 45986 / CECT 9034 / ACN14a).